The primary structure comprises 290 residues: Ribosomal RNA small subunit methyltransferase A (290 aa).

S-adenosyl-L-methionine contacts are provided by N27, L29, G54, E75, D100, and N125.

It belongs to the class I-like SAM-binding methyltransferase superfamily. rRNA adenine N(6)-methyltransferase family. RsmA subfamily.

The protein localises to the cytoplasm. The catalysed reaction is adenosine(1518)/adenosine(1519) in 16S rRNA + 4 S-adenosyl-L-methionine = N(6)-dimethyladenosine(1518)/N(6)-dimethyladenosine(1519) in 16S rRNA + 4 S-adenosyl-L-homocysteine + 4 H(+). Specifically dimethylates two adjacent adenosines (A1518 and A1519) in the loop of a conserved hairpin near the 3'-end of 16S rRNA in the 30S particle. May play a critical role in biogenesis of 30S subunits. In Streptococcus gordonii (strain Challis / ATCC 35105 / BCRC 15272 / CH1 / DL1 / V288), this protein is Ribosomal RNA small subunit methyltransferase A.